A 259-amino-acid chain; its full sequence is uncharacterized protein (259 aa).

To M.thermoautotrophicum MTH738.

This is an uncharacterized protein from Methanocaldococcus jannaschii (strain ATCC 43067 / DSM 2661 / JAL-1 / JCM 10045 / NBRC 100440) (Methanococcus jannaschii).